We begin with the raw amino-acid sequence, 744 residues long: Probable ubiquitin carboxyl-terminal hydrolase MINDY-4 (744 aa).

Serine 143, serine 220, and serine 224 each carry phosphoserine. The disordered stretch occupies residues 211-358 (GMMAGPVASS…QLVSDRTDDK (148 aa)). The span at 265 to 277 (VPDSSSDSVSRSP) shows a compositional bias: low complexity. The segment covering 290–299 (NVTSSSQGLS) has biased composition (polar residues). Serine 295 is modified (phosphoserine). The segment covering 300–310 (QRDRPRLRSVS) has biased composition (basic and acidic residues). Cysteine 443 (nucleophile) is an active-site residue. Histidine 664 acts as the Proton acceptor in catalysis.

This sequence belongs to the MINDY deubiquitinase family. FAM188 subfamily.

It catalyses the reaction Thiol-dependent hydrolysis of ester, thioester, amide, peptide and isopeptide bonds formed by the C-terminal Gly of ubiquitin (a 76-residue protein attached to proteins as an intracellular targeting signal).. Probable hydrolase that can remove 'Lys-48'-linked conjugated ubiquitin from proteins. The protein is Probable ubiquitin carboxyl-terminal hydrolase MINDY-4 (Mindy4) of Mus musculus (Mouse).